Consider the following 578-residue polypeptide: Avenacosidase 2 (578 aa).

The N-terminal 57 residues, 1 to 57 (MALLCSALSNSTHPSFRSHIAGANSENLWHLSAHPAQKSKRRCNLTLSSRAAARISS), are a transit peptide targeting the chloroplast. Residues glutamine 89, histidine 193, and 238-239 (NE) each bind a beta-D-glucoside. Glutamate 239 acts as the Proton donor in catalysis. Residues cysteine 258 and cysteine 264 are joined by a disulfide bond. A beta-D-glucoside contacts are provided by residues tyrosine 381, glutamate 454, tryptophan 504, 511–512 (EW), and phenylalanine 520. Glutamate 454 serves as the catalytic Nucleophile.

Belongs to the glycosyl hydrolase 1 family. In terms of assembly, heteromultimer with P60A in a 1:1 stoichiometry. Aggregates to form the fibrillar stromacentre.

The protein resides in the plastid. It is found in the chloroplast stroma. It catalyses the reaction avenacoside B + H2O = 26-desgluco-avenacoside B + D-glucose. In terms of biological role, beta-glucosidase acting as a preformed defense system. Hydrolyzes the bisdesmosides avenacosides A and B to 26-desgluco-avenacosides exhibiting fungicidal activity. Can use beta-fucoside &gt; beta-glucoside &gt; beta-galactoside &gt; beta-xyloside as substrates, but not alpha-glycosides, beta-thioglucosides and disaccharides. This Avena sativa (Oat) protein is Avenacosidase 2 (P60B).